Reading from the N-terminus, the 403-residue chain is GPI mannosyltransferase 1 (403 aa).

Topologically, residues 1 to 4 (MTGE) are cytoplasmic. A helical transmembrane segment spans residues 5–25 (EWGLTVLSFLVRVGFFLFGIY). Over 26–78 (QDANFKVRYTDIDYFVFHDAAKYVYEGKSPYARDTYRYTPLLSWLLVPNHYFG) the chain is Lumenal. Residues 79-99 (WFHLGKVIFVIFDLVTGLIIM) form a helical membrane-spanning segment. The Cytoplasmic segment spans residues 100 to 110 (KLLNQAISRKR). A helical membrane pass occupies residues 111-131 (ALILESIWLLNPMVITISTRG). A topological domain (lumenal) is located at residue Asn-132. The helical transmembrane segment at 133–149 (AESVLCCLIMFTLFFLQ) threads the bilayer. Over 150 to 160 (KSRYTLAGILY) the chain is Cytoplasmic. Residues 161 to 181 (GLSIHFKIYPIIYCIPIAIFI) form a helical membrane-spanning segment. The Lumenal portion of the chain corresponds to 182-193 (YYNKRNQGPRTQ). The chain crosses the membrane as a helical span at residues 194-214 (LTSLLNIGLSTLTTLLGCGWA). Residues 215 to 266 (MYKIYGYEFLDQAYLYHLYRTDHRHNFSVWNMLLYLDSANKENGESNLSRYA) lie on the Cytoplasmic side of the membrane. Residues 267 to 287 (FVPQLLLVLVTGCLEWWNPTF) form a helical membrane-spanning segment. The Lumenal portion of the chain corresponds to 288-310 (DNLLRVLFVQTFAFVTYNKVCTS). A helical membrane pass occupies residues 311–331 (QYFVWYLIFLPFYLSRTHIGW). Residues 332–334 (KKG) are Cytoplasmic-facing. A helical membrane pass occupies residues 335 to 355 (LLMATLWVGTQGIWLSQGYYL). The Lumenal portion of the chain corresponds to 356-361 (EFEGKN). The chain crosses the membrane as a helical span at residues 362–382 (VFYPGLFIASVLFFVTNVWLL). The Cytoplasmic segment spans residues 383-403 (GQFITDIKIPTQPTVSNKKNN).

Belongs to the PIGM family.

The protein resides in the endoplasmic reticulum membrane. The protein operates within glycolipid biosynthesis; glycosylphosphatidylinositol-anchor biosynthesis. In terms of biological role, mannosyltransferase involved in glycosylphosphatidylinositol-anchor biosynthesis. Transfers the first alpha-1,4-mannose to GlcN-acyl-PI during GPI precursor assembly. Required for cell wall integrity. The chain is GPI mannosyltransferase 1 (GPI14) from Saccharomyces cerevisiae (strain ATCC 204508 / S288c) (Baker's yeast).